The following is a 461-amino-acid chain: Probable tubulin polyglutamylase TTLL9 (461 aa).

The tract at residues 1-21 (MSRPKNQNYKGHGLQKGKERE) is disordered. Positions 22 to 402 (QRASIRFKTT…EARLTGREKR (381 aa)) constitute a TTL domain. Residues Lys149 and 155 to 156 (QG) each bind ATP. Residue Gln155 participates in a protein binding. The tract at residues 182 to 208 (SLEAQPARNTVNPSGSHDTRSSDDQKD) is disordered. Positions 188–197 (ARNTVNPSGS) are enriched in polar residues. The span at 198–208 (HDTRSSDDQKD) shows a compositional bias: basic and acidic residues. ATP-binding positions include 218–221 (QRYI) and 231–233 (KFD). Arg257 lines the L-glutamate pocket. 276–277 (TN) is a binding site for ATP. Residue Lys294 coordinates L-glutamate. 3 residues coordinate Mg(2+): Asp348, Glu361, and Asn363. Lys379 serves as a coordination point for L-glutamate.

Belongs to the tubulin--tyrosine ligase family. It depends on Mg(2+) as a cofactor.

The protein resides in the cytoplasm. Its subcellular location is the cytoskeleton. The protein localises to the cilium basal body. It localises to the flagellum axoneme. The catalysed reaction is (L-glutamyl)(n)-gamma-L-glutamyl-L-glutamyl-[protein] + L-glutamate + ATP = (L-glutamyl)(n+1)-gamma-L-glutamyl-L-glutamyl-[protein] + ADP + phosphate + H(+). Functionally, probable tubulin polyglutamylase that generates side chains of glutamate on the gamma-carboxyl group of specific glutamate residues within the C-terminal tail of target proteins. Similar to TTLL1, may acquire enzymatic activity only in complex with other proteins as it is most likely lacking domains important for autonomous activity. Mediates tubulin polyglutamylation which induces establishment of microtubule heterogeneity in sperm flagella, thereby playing a role in normal motile flagella axoneme structure and sperm flagella beating pattern. The protein is Probable tubulin polyglutamylase TTLL9 (TTLL9) of Bos taurus (Bovine).